The primary structure comprises 164 residues: Crossover junction endodeoxyribonuclease RuvC (164 aa).

Residues Asp-7, Glu-67, and Asp-140 contribute to the active site. Residues Asp-7, Glu-67, and Asp-140 each coordinate Mg(2+).

This sequence belongs to the RuvC family. In terms of assembly, homodimer which binds Holliday junction (HJ) DNA. The HJ becomes 2-fold symmetrical on binding to RuvC with unstacked arms; it has a different conformation from HJ DNA in complex with RuvA. In the full resolvosome a probable DNA-RuvA(4)-RuvB(12)-RuvC(2) complex forms which resolves the HJ. Requires Mg(2+) as cofactor.

Its subcellular location is the cytoplasm. The enzyme catalyses Endonucleolytic cleavage at a junction such as a reciprocal single-stranded crossover between two homologous DNA duplexes (Holliday junction).. In terms of biological role, the RuvA-RuvB-RuvC complex processes Holliday junction (HJ) DNA during genetic recombination and DNA repair. Endonuclease that resolves HJ intermediates. Cleaves cruciform DNA by making single-stranded nicks across the HJ at symmetrical positions within the homologous arms, yielding a 5'-phosphate and a 3'-hydroxyl group; requires a central core of homology in the junction. The consensus cleavage sequence is 5'-(A/T)TT(C/G)-3'. Cleavage occurs on the 3'-side of the TT dinucleotide at the point of strand exchange. HJ branch migration catalyzed by RuvA-RuvB allows RuvC to scan DNA until it finds its consensus sequence, where it cleaves and resolves the cruciform DNA. This Alkaliphilus metalliredigens (strain QYMF) protein is Crossover junction endodeoxyribonuclease RuvC.